We begin with the raw amino-acid sequence, 337 residues long: MTQPIARSIPLQVVSGDTAAPAPLQTGVKQIGGDKINRSPVQFVDAPVLRKPSWIRVRIPSGNAVQNLKAKLRENRLVTVCEEASCPNIHECFSHGTATFMILGEVCTRRCSFCDVAHGRPKPPDASEPASLAATVADMGLKYVVVTSVDRDDLRDGGAQHFVDCISAIRASSPNTRIEILTPDFRGKGRMDRALEILALSPPDVFNHNIETVPDLYPNVRPGADYQWSLTLLQRFKAQHPSIATKSGIMLGLGETMEQVQATLRDLRAHDVDMITIGQYLQPTPHHHPVMRYWTPEEYKALEDYGNALGFSHVASGPMVRSSYHADRQAAGAGVAA.

C81, C86, C92, C107, C111, C114, and S323 together coordinate [4Fe-4S] cluster. In terms of domain architecture, Radical SAM core spans 93-312; it reads FSHGTATFMI…EDYGNALGFS (220 aa).

Belongs to the radical SAM superfamily. Lipoyl synthase family. It depends on [4Fe-4S] cluster as a cofactor.

The protein resides in the cytoplasm. It catalyses the reaction [[Fe-S] cluster scaffold protein carrying a second [4Fe-4S](2+) cluster] + N(6)-octanoyl-L-lysyl-[protein] + 2 oxidized [2Fe-2S]-[ferredoxin] + 2 S-adenosyl-L-methionine + 4 H(+) = [[Fe-S] cluster scaffold protein] + N(6)-[(R)-dihydrolipoyl]-L-lysyl-[protein] + 4 Fe(3+) + 2 hydrogen sulfide + 2 5'-deoxyadenosine + 2 L-methionine + 2 reduced [2Fe-2S]-[ferredoxin]. The protein operates within protein modification; protein lipoylation via endogenous pathway; protein N(6)-(lipoyl)lysine from octanoyl-[acyl-carrier-protein]: step 2/2. In terms of biological role, catalyzes the radical-mediated insertion of two sulfur atoms into the C-6 and C-8 positions of the octanoyl moiety bound to the lipoyl domains of lipoate-dependent enzymes, thereby converting the octanoylated domains into lipoylated derivatives. This is Lipoyl synthase from Xanthomonas euvesicatoria pv. vesicatoria (strain 85-10) (Xanthomonas campestris pv. vesicatoria).